Consider the following 259-residue polypeptide: Imidazole glycerol phosphate synthase subunit HisF (259 aa).

Residues Asp11 and Asp130 contribute to the active site.

It belongs to the HisA/HisF family. As to quaternary structure, heterodimer of HisH and HisF.

The protein resides in the cytoplasm. It carries out the reaction 5-[(5-phospho-1-deoxy-D-ribulos-1-ylimino)methylamino]-1-(5-phospho-beta-D-ribosyl)imidazole-4-carboxamide + L-glutamine = D-erythro-1-(imidazol-4-yl)glycerol 3-phosphate + 5-amino-1-(5-phospho-beta-D-ribosyl)imidazole-4-carboxamide + L-glutamate + H(+). The protein operates within amino-acid biosynthesis; L-histidine biosynthesis; L-histidine from 5-phospho-alpha-D-ribose 1-diphosphate: step 5/9. Its function is as follows. IGPS catalyzes the conversion of PRFAR and glutamine to IGP, AICAR and glutamate. The HisF subunit catalyzes the cyclization activity that produces IGP and AICAR from PRFAR using the ammonia provided by the HisH subunit. This is Imidazole glycerol phosphate synthase subunit HisF from Polaromonas sp. (strain JS666 / ATCC BAA-500).